The sequence spans 368 residues: Phosphoserine aminotransferase (368 aa).

Arginine 44 serves as a coordination point for L-glutamate. Pyridoxal 5'-phosphate contacts are provided by residues 78–79, tryptophan 104, threonine 157, aspartate 179, and glutamine 202; that span reads AT. The residue at position 203 (lysine 203) is an N6-(pyridoxal phosphate)lysine. 244–245 serves as a coordination point for pyridoxal 5'-phosphate; that stretch reads NT.

The protein belongs to the class-V pyridoxal-phosphate-dependent aminotransferase family. SerC subfamily. As to quaternary structure, homodimer. Pyridoxal 5'-phosphate serves as cofactor.

The protein localises to the cytoplasm. The enzyme catalyses O-phospho-L-serine + 2-oxoglutarate = 3-phosphooxypyruvate + L-glutamate. It carries out the reaction 4-(phosphooxy)-L-threonine + 2-oxoglutarate = (R)-3-hydroxy-2-oxo-4-phosphooxybutanoate + L-glutamate. It participates in amino-acid biosynthesis; L-serine biosynthesis; L-serine from 3-phospho-D-glycerate: step 2/3. Its pathway is cofactor biosynthesis; pyridoxine 5'-phosphate biosynthesis; pyridoxine 5'-phosphate from D-erythrose 4-phosphate: step 3/5. Functionally, catalyzes the reversible conversion of 3-phosphohydroxypyruvate to phosphoserine and of 3-hydroxy-2-oxo-4-phosphonooxybutanoate to phosphohydroxythreonine. In Neisseria meningitidis serogroup A / serotype 4A (strain DSM 15465 / Z2491), this protein is Phosphoserine aminotransferase.